The chain runs to 236 residues: Ribosome-inactivating protein saporin-3 (236 aa).

Glu-148 is an active-site residue.

This sequence belongs to the ribosome-inactivating protein family. Type 1 RIP subfamily.

It catalyses the reaction Endohydrolysis of the N-glycosidic bond at one specific adenosine on the 28S rRNA.. Ribosome-inactivating protein of type 1, inhibits protein synthesis in animal cells. Useful as immunotoxin for pharmacological applications. The chain is Ribosome-inactivating protein saporin-3 (SAP3) from Saponaria officinalis (Common soapwort).